The primary structure comprises 311 residues: Probable 5-dehydro-4-deoxyglucarate dehydratase (311 aa).

This sequence belongs to the DapA family.

The enzyme catalyses 5-dehydro-4-deoxy-D-glucarate + H(+) = 2,5-dioxopentanoate + CO2 + H2O. Its pathway is carbohydrate acid metabolism; D-glucarate degradation; 2,5-dioxopentanoate from D-glucarate: step 2/2. This Ralstonia nicotianae (strain ATCC BAA-1114 / GMI1000) (Ralstonia solanacearum) protein is Probable 5-dehydro-4-deoxyglucarate dehydratase.